We begin with the raw amino-acid sequence, 419 residues long: ATP-dependent RNA helicase RhlB (419 aa).

A Q motif motif is present at residues 9–37; that stretch reads QRFSDLALHRSVQQAIKEKGFEFCTPIQA. Positions 40 to 217 constitute a Helicase ATP-binding domain; sequence LPITLKGQDI…FEHMNDPQYV (178 aa). Residue 53 to 60 coordinates ATP; sequence AQTGTGKT. The DEAD box signature appears at 163 to 166; it reads DEAD. The region spanning 241 to 388 is the Helicase C-terminal domain; the sequence is KMALLMTLLE…VSQYDAKALI (148 aa).

It belongs to the DEAD box helicase family. RhlB subfamily. In terms of assembly, component of the RNA degradosome, which is a multiprotein complex involved in RNA processing and mRNA degradation.

It localises to the cytoplasm. It catalyses the reaction ATP + H2O = ADP + phosphate + H(+). Functionally, DEAD-box RNA helicase involved in RNA degradation. Has RNA-dependent ATPase activity and unwinds double-stranded RNA. This chain is ATP-dependent RNA helicase RhlB, found in Histophilus somni (strain 129Pt) (Haemophilus somnus).